The chain runs to 61 residues: MNAAELRKLSAEQLKDKLAESRKELFDMRFRHATAQLEKTSNLPATKRDIARILTILKEKG.

Belongs to the universal ribosomal protein uL29 family.

In Nitratidesulfovibrio vulgaris (strain DSM 19637 / Miyazaki F) (Desulfovibrio vulgaris), this protein is Large ribosomal subunit protein uL29.